A 977-amino-acid polypeptide reads, in one-letter code: Leucine--tRNA ligase (977 aa).

Residues 11-21 (PYVNGYLHLGH) carry the 'HIGH' region motif. The insert stretch occupies residues 220–318 (VFYVYELYSL…EYYNTKVETQ (99 aa)). Positions 699-703 (KMSKS) match the 'KMSKS' region motif. Lysine 702 provides a ligand contact to ATP.

It belongs to the class-I aminoacyl-tRNA synthetase family.

It localises to the cytoplasm. It catalyses the reaction tRNA(Leu) + L-leucine + ATP = L-leucyl-tRNA(Leu) + AMP + diphosphate. The sequence is that of Leucine--tRNA ligase (leuS) from Nanoarchaeum equitans (strain Kin4-M).